Consider the following 140-residue polypeptide: Ribosomal RNA large subunit methyltransferase H (140 aa).

Residues Leu-55 and Gly-87 each contribute to the S-adenosyl-L-methionine site.

The protein belongs to the RNA methyltransferase RlmH family. As to quaternary structure, homodimer.

It localises to the cytoplasm. The enzyme catalyses pseudouridine(1915) in 23S rRNA + S-adenosyl-L-methionine = N(3)-methylpseudouridine(1915) in 23S rRNA + S-adenosyl-L-homocysteine + H(+). Specifically methylates the pseudouridine at position 1915 (m3Psi1915) in 23S rRNA. The sequence is that of Ribosomal RNA large subunit methyltransferase H from Rhizorhabdus wittichii (strain DSM 6014 / CCUG 31198 / JCM 15750 / NBRC 105917 / EY 4224 / RW1) (Sphingomonas wittichii).